The following is a 300-amino-acid chain: MSIKSGFVALAGKPNVGKSTFINAVMGRKVVIVSDKPQTTRNRINCIYTDKDSQIIFVDTPGIHKPLHRLGEYMVKAAVQALKGVDLVLFMLDAADGFTKTDEHVAKIVNDSGTKTIIAVNKIDVAGEEKAKAVGELAKSMVENVVSVHYISALKGEGVFEVLEKIKEELPEGPQYYPEDMVTDRPLSFMAAEIIREKIFHLTRQEVPHSTAVVIEEIKDRPNGVLYIRANIYVERDSQKGILIGKNGSMIKKIGTLAREELEFLVGRKVYLDLNVKVKEKWREKDFIILQEIGLKDDIK.

Residues 4–172 (KSGFVALAGK…LEKIKEELPE (169 aa)) form the Era-type G domain. Positions 12-19 (GKPNVGKS) are G1. 12 to 19 (GKPNVGKS) lines the GTP pocket. The interval 38 to 42 (QTTRN) is G2. A G3 region spans residues 59 to 62 (DTPG). GTP is bound by residues 59–63 (DTPGI) and 121–124 (NKID). The G4 stretch occupies residues 121–124 (NKID). The G5 stretch occupies residues 151–153 (ISA). The KH type-2 domain occupies 195 to 280 (IREKIFHLTR…YLDLNVKVKE (86 aa)).

It belongs to the TRAFAC class TrmE-Era-EngA-EngB-Septin-like GTPase superfamily. Era GTPase family. Monomer.

Its subcellular location is the cytoplasm. The protein resides in the cell inner membrane. In terms of biological role, an essential GTPase that binds both GDP and GTP, with rapid nucleotide exchange. Plays a role in 16S rRNA processing and 30S ribosomal subunit biogenesis and possibly also in cell cycle regulation and energy metabolism. This chain is GTPase Era, found in Thermotoga maritima (strain ATCC 43589 / DSM 3109 / JCM 10099 / NBRC 100826 / MSB8).